Reading from the N-terminus, the 300-residue chain is tRNA dimethylallyltransferase 1 (300 aa).

Position 10–17 (10–17 (GPTGVGKT)) interacts with ATP. 12–17 (TGVGKT) contributes to the substrate binding site. The interaction with substrate tRNA stretch occupies residues 35–38 (DSRQ).

This sequence belongs to the IPP transferase family. As to quaternary structure, monomer. Mg(2+) serves as cofactor.

The enzyme catalyses adenosine(37) in tRNA + dimethylallyl diphosphate = N(6)-dimethylallyladenosine(37) in tRNA + diphosphate. Functionally, catalyzes the transfer of a dimethylallyl group onto the adenine at position 37 in tRNAs that read codons beginning with uridine, leading to the formation of N6-(dimethylallyl)adenosine (i(6)A). The chain is tRNA dimethylallyltransferase 1 from Phocaeicola vulgatus (strain ATCC 8482 / DSM 1447 / JCM 5826 / CCUG 4940 / NBRC 14291 / NCTC 11154) (Bacteroides vulgatus).